Reading from the N-terminus, the 285-residue chain is 33 kDa chaperonin (285 aa).

Cystine bridges form between C228–C230 and C261–C264.

Belongs to the HSP33 family. In terms of processing, under oxidizing conditions two disulfide bonds are formed involving the reactive cysteines. Under reducing conditions zinc is bound to the reactive cysteines and the protein is inactive.

The protein localises to the cytoplasm. In terms of biological role, redox regulated molecular chaperone. Protects both thermally unfolding and oxidatively damaged proteins from irreversible aggregation. Plays an important role in the bacterial defense system toward oxidative stress. This chain is 33 kDa chaperonin, found in Hahella chejuensis (strain KCTC 2396).